The chain runs to 255 residues: Hemin import ATP-binding protein HmuV (255 aa).

In terms of domain architecture, ABC transporter spans 2 to 238; it reads LDVEGLHLKR…AALNAVFGID (237 aa). 34–41 contributes to the ATP binding site; that stretch reads GPNGAGKS.

It belongs to the ABC transporter superfamily. Heme (hemin) importer (TC 3.A.1.14.5) family. In terms of assembly, the complex is composed of two ATP-binding proteins (HmuV), two transmembrane proteins (HmuU) and a solute-binding protein (HmuT).

The protein resides in the cell inner membrane. Its function is as follows. Part of the ABC transporter complex HmuTUV involved in hemin import. Responsible for energy coupling to the transport system. In Pseudomonas entomophila (strain L48), this protein is Hemin import ATP-binding protein HmuV.